The chain runs to 217 residues: LexA repressor (217 aa).

A DNA-binding region (H-T-H motif) is located at residues 28 to 48 (RAEIAAEFGFSSPNAAEEHLR). Active-site for autocatalytic cleavage activity residues include Ser136 and Lys173.

This sequence belongs to the peptidase S24 family. Homodimer.

It catalyses the reaction Hydrolysis of Ala-|-Gly bond in repressor LexA.. In terms of biological role, represses a number of genes involved in the response to DNA damage (SOS response), including recA and lexA. In the presence of single-stranded DNA, RecA interacts with LexA causing an autocatalytic cleavage which disrupts the DNA-binding part of LexA, leading to derepression of the SOS regulon and eventually DNA repair. This Cupriavidus taiwanensis (strain DSM 17343 / BCRC 17206 / CCUG 44338 / CIP 107171 / LMG 19424 / R1) (Ralstonia taiwanensis (strain LMG 19424)) protein is LexA repressor.